A 368-amino-acid polypeptide reads, in one-letter code: uncharacterized protein (368 aa).

The disordered stretch occupies residues 237–287; it reads ESLSIPSRRRPSSIAPIGTRPSRKEIAFSNSSTPTDQTLRPPNPPAANGNA. Positions 238 to 253 are enriched in low complexity; it reads SLSIPSRRRPSSIAPI. Polar residues predominate over residues 264–276; it reads FSNSSTPTDQTLR.

This is an uncharacterized protein from Schizosaccharomyces pombe (strain 972 / ATCC 24843) (Fission yeast).